Here is a 447-residue protein sequence, read N- to C-terminus: Phospholipase A(1) LCAT3 (447 aa).

Ser177 functions as the Acyl-ester intermediate in the catalytic mechanism. Residues Asp384 and His409 each act as charge relay system in the active site.

It belongs to the AB hydrolase superfamily. Lipase family.

The protein localises to the microsome membrane. The enzyme catalyses a 1,2-diacyl-sn-glycero-3-phosphocholine + H2O = a 2-acyl-sn-glycero-3-phosphocholine + a fatty acid + H(+). In terms of biological role, hydrolyzes the sn-1 acylester bond of phospholipids. Phosphatidylcholine, phosphatidylethanolamine and phosphatidic acid can be used as substrates. Weak activity with lysophosphatidylcholine and no activity with tripalmitoylglycerol and cholesteryl oleate. Seems to have a preference for unsaturated fatty acids at the sn-1 position. The polypeptide is Phospholipase A(1) LCAT3 (LCAT3) (Arabidopsis thaliana (Mouse-ear cress)).